We begin with the raw amino-acid sequence, 463 residues long: Senescence/dehydration-associated protein At3g51250 (463 aa).

Basic and acidic residues predominate over residues 1 to 12 (MNPSHGGDDKQR). Disordered stretches follow at residues 1 to 31 (MNPSHGGDDKQRPAMYPQVDQSIPDNPFAST), 52 to 74 (PNLFPDHGDASNDQSPSAPPQAT), and 146 to 172 (IHPPKEKGQGSGSDSDDEQGQKSKSKS). Over residues 19–31 (VDQSIPDNPFAST) the composition is skewed to polar residues. One can recognise a Senescence domain in the interval 269-437 (IASGSGKLIR…AWVAFKIRKA (169 aa)).

In Arabidopsis thaliana (Mouse-ear cress), this protein is Senescence/dehydration-associated protein At3g51250.